We begin with the raw amino-acid sequence, 185 residues long: Ribosome-recycling factor (185 aa).

This sequence belongs to the RRF family.

It is found in the cytoplasm. In terms of biological role, responsible for the release of ribosomes from messenger RNA at the termination of protein biosynthesis. May increase the efficiency of translation by recycling ribosomes from one round of translation to another. This is Ribosome-recycling factor from Chromobacterium violaceum (strain ATCC 12472 / DSM 30191 / JCM 1249 / CCUG 213 / NBRC 12614 / NCIMB 9131 / NCTC 9757 / MK).